A 187-amino-acid chain; its full sequence is Phosphoheptose isomerase (187 aa).

The 154-residue stretch at 34–187 (CIEALKNQKK…ILCSLIDESF (154 aa)) folds into the SIS domain. A substrate-binding site is contributed by 49–51 (NGG). His-58 and Glu-62 together coordinate Zn(2+). Substrate-binding positions include Glu-62, 91–92 (ND), 117–119 (STS), Ser-122, and Gln-169. Positions 169 and 177 each coordinate Zn(2+).

This sequence belongs to the SIS family. GmhA subfamily. As to quaternary structure, homotetramer. The cofactor is Zn(2+).

It localises to the cytoplasm. The catalysed reaction is 2 D-sedoheptulose 7-phosphate = D-glycero-alpha-D-manno-heptose 7-phosphate + D-glycero-beta-D-manno-heptose 7-phosphate. It functions in the pathway carbohydrate biosynthesis; D-glycero-D-manno-heptose 7-phosphate biosynthesis; D-glycero-alpha-D-manno-heptose 7-phosphate and D-glycero-beta-D-manno-heptose 7-phosphate from sedoheptulose 7-phosphate: step 1/1. In terms of biological role, catalyzes the isomerization of sedoheptulose 7-phosphate in D-glycero-D-manno-heptose 7-phosphate. In Nitratiruptor sp. (strain SB155-2), this protein is Phosphoheptose isomerase.